The sequence spans 440 residues: MNVVVLFSLVATHADIDLETVARLSAGSAAVSTSTVVLATCNRFEIYSAAENPATARAEMEAALAHATGFAPSLVSSSFKLLTGTDVAKHLFAVASGLDSAVVGEREIAGQVRRALIDAQTAFPVPGPLVRLFQTASRTAKDVGSQTALGSQGRSIVSVALDLAGDSSATAWDQRKAVVFGTGAYAGVTMALLRERGVSDLSVYSSSGRAADFVASRGGTAAESLEEALGSADLVIGCSGSDQRVSAETLADIRRRTGTAGEPLSVIDLALSRDFDPAITELPGVELLTLETVRLAAPSEQESALLQTQVIVSRAAADFELSIATRSVDTAIVALRKHTMAVLDAEMERVRAQHGCTAAAEEVEFALRRMVKQLLHGPTVRARELAAAGQQAEYIAALQSLYGIELESPTPAAQPVESIPAVEPASCPVNHNAVDRSQSA.

Residues 40–43 (TCNR), Ser100, 105–107 (ERE), and Gln111 contribute to the substrate site. Catalysis depends on Cys41, which acts as the Nucleophile. Position 181-186 (181-186 (GTGAYA)) interacts with NADP(+).

Belongs to the glutamyl-tRNA reductase family. In terms of assembly, homodimer.

It carries out the reaction (S)-4-amino-5-oxopentanoate + tRNA(Glu) + NADP(+) = L-glutamyl-tRNA(Glu) + NADPH + H(+). Its pathway is porphyrin-containing compound metabolism; protoporphyrin-IX biosynthesis; 5-aminolevulinate from L-glutamyl-tRNA(Glu): step 1/2. Its function is as follows. Catalyzes the NADPH-dependent reduction of glutamyl-tRNA(Glu) to glutamate 1-semialdehyde (GSA). In Renibacterium salmoninarum (strain ATCC 33209 / DSM 20767 / JCM 11484 / NBRC 15589 / NCIMB 2235), this protein is Glutamyl-tRNA reductase.